A 433-amino-acid chain; its full sequence is Homoserine dehydrogenase (433 aa).

Residues T13 and V14 each contribute to the NADPH site. NAD(+) contacts are provided by V14 and V33. V14 is an NADP(+) binding site. The NADPH site is built by K45 and K105. Positions 45 and 105 each coordinate NADP(+). Na(+)-binding residues include E129, V132, G134, and I136. The NADP(+) site is built by G187 and E190. L-homoserine-binding residues include E190 and D201. K205 serves as the catalytic Proton donor. Residue G302 coordinates NADPH. Position 302 (G302) interacts with NAD(+). G302 is a binding site for NADP(+). The ACT domain maps to F350 to R426.

This sequence belongs to the homoserine dehydrogenase family. As to quaternary structure, homotetramer. It depends on a metal cation as a cofactor.

Its subcellular location is the cytoplasm. It localises to the secreted. The catalysed reaction is L-homoserine + NADP(+) = L-aspartate 4-semialdehyde + NADPH + H(+). Its pathway is amino-acid biosynthesis; L-methionine biosynthesis via de novo pathway; L-homoserine from L-aspartate: step 3/3. It functions in the pathway amino-acid biosynthesis; L-threonine biosynthesis; L-threonine from L-aspartate: step 3/5. Feedback inhibition by threonine. Activated by sodium ions. In terms of biological role, catalyzes the conversion of L-aspartate-beta-semialdehyde (L-Asa) to L-homoserine (L-Hse), the third step in the biosynthesis of threonine and methionine from aspartate. Utilizes NADPH but not NADH as coenzyme. The protein is Homoserine dehydrogenase (hom) of Bacillus subtilis (strain 168).